A 410-amino-acid polypeptide reads, in one-letter code: Tryptophan synthase beta chain (410 aa).

The residue at position 98 (lysine 98) is an N6-(pyridoxal phosphate)lysine.

It belongs to the TrpB family. Tetramer of two alpha and two beta chains. It depends on pyridoxal 5'-phosphate as a cofactor.

The enzyme catalyses (1S,2R)-1-C-(indol-3-yl)glycerol 3-phosphate + L-serine = D-glyceraldehyde 3-phosphate + L-tryptophan + H2O. It participates in amino-acid biosynthesis; L-tryptophan biosynthesis; L-tryptophan from chorismate: step 5/5. Functionally, the beta subunit is responsible for the synthesis of L-tryptophan from indole and L-serine. This is Tryptophan synthase beta chain from Dinoroseobacter shibae (strain DSM 16493 / NCIMB 14021 / DFL 12).